The primary structure comprises 387 residues: MGILGLSKLIADLAPQAIRESEMKHFFGRKVAIDASMCLYQFLIAVRSEGAQLATVNGDPTSHLMGMFYRTIRLLDNGIKPVYVFDGKPPDLKSGELAKRAERREEAEKALKAATDAGDDAGIEKFNRRLVRVTKEHAKEAKELLTLMGVPYVDAPCEAEAQCAALVKAGKVYATATEDMDALTFGSTKLLRYLTYSEARKMPVKEFSYDKLLEGLSINSREFIDLCILLGCDYCESIKGIGPKRAIELINNYRDIETILDNLDSSKYTVPENWNYKVARELFIEPEVANAESIDLKWVEPDEEGLVKFLCGDRQFSEERVRNGAKKLMKSKQAQTQVRLDSFFKTLPSTPNATNAAKRKAEEAKKSANNKKAKTSGGVGGRGRRPK.

The interval 1-104 (MGILGLSKLI…GELAKRAERR (104 aa)) is N-domain. A Mg(2+)-binding site is contributed by Asp-34. Residues Arg-47 and Arg-70 each contribute to the DNA site. Asp-86, Glu-158, Glu-160, Asp-179, and Asp-181 together coordinate Mg(2+). Positions 122 to 253 (GIEKFNRRLV…KRAIELINNY (132 aa)) are I-domain. Residue Glu-158 coordinates DNA. The DNA site is built by Gly-231 and Asp-233. Asp-233 is a binding site for Mg(2+). Residues 336-344 (TQVRLDSFF) are interaction with PCNA. The interval 346-387 (TLPSTPNATNAAKRKAEEAKKSANNKKAKTSGGVGGRGRRPK) is disordered.

It belongs to the XPG/RAD2 endonuclease family. FEN1 subfamily. As to quaternary structure, interacts with PCNA. Three molecules of FEN1 bind to one PCNA trimer with each molecule binding to one PCNA monomer. PCNA stimulates the nuclease activity without altering cleavage specificity. Mg(2+) is required as a cofactor. Post-translationally, phosphorylated. Phosphorylation upon DNA damage induces relocalization to the nuclear plasma.

The protein resides in the nucleus. The protein localises to the nucleolus. It is found in the nucleoplasm. It localises to the mitochondrion. In terms of biological role, structure-specific nuclease with 5'-flap endonuclease and 5'-3' exonuclease activities involved in DNA replication and repair. During DNA replication, cleaves the 5'-overhanging flap structure that is generated by displacement synthesis when DNA polymerase encounters the 5'-end of a downstream Okazaki fragment. It enters the flap from the 5'-end and then tracks to cleave the flap base, leaving a nick for ligation. Also involved in the long patch base excision repair (LP-BER) pathway, by cleaving within the apurinic/apyrimidinic (AP) site-terminated flap. Acts as a genome stabilization factor that prevents flaps from equilibrating into structures that lead to duplications and deletions. Also possesses 5'-3' exonuclease activity on nicked or gapped double-stranded DNA, and exhibits RNase H activity. Also involved in replication and repair of rDNA and in repairing mitochondrial DNA. The protein is Flap endonuclease 1 of Drosophila erecta (Fruit fly).